We begin with the raw amino-acid sequence, 192 residues long: Leucine-rich repeat-containing protein 51 (192 aa).

3 LRR repeats span residues 50 to 71, 80 to 101, and 103 to 124; these read MTQS…NHAV, NLAW…LTTF, and NLSV…NKLA. An LRRCT domain is found at 137 to 175; the sequence is NPIEEEKGYRQYVLCTLPHITTFDFSGVTKADRTTAEVW.

The protein localises to the cytoplasm. The polypeptide is Leucine-rich repeat-containing protein 51 (Bos taurus (Bovine)).